Here is a 225-residue protein sequence, read N- to C-terminus: Elongation factor 1-beta (225 aa).

The GST C-terminal domain maps to 2-84 (GFGDLKSPAG…ALGKYGPADV (83 aa)). Lys7 bears the N6-acetyllysine mark. Phosphoserine is present on residues Ser8 and Ser42. The segment at 78-115 (KYGPADVEDTTGSGATDSKDDDDIDLFGSDDEEESEEA) is disordered. Residues Thr88 and Thr93 each carry the phosphothreonine modification. Phosphoserine is present on residues Ser95 and Ser106. The segment covering 96–113 (KDDDDIDLFGSDDEEESE) has biased composition (acidic residues). Residue Lys147 forms a Glycyl lysine isopeptide (Lys-Gly) (interchain with G-Cter in SUMO2) linkage. Ser174 is modified (phosphoserine).

The protein belongs to the EF-1-beta/EF-1-delta family. EF-1 is composed of 4 subunits: alpha, beta (alpha subunit of the eEF1B subcomplex), delta (beta subunit of the eEF1B subcomplex), and gamma (gamma subunit of the eEF1B subcomplex). Interacts with elongation factor EEF1A1. In terms of processing, phosphorylation affects the GDP/GTP exchange rate.

In terms of biological role, catalytic subunit of the guanine nucleotide exchange factor (GEF) (eEF1B subcomplex) of the eukaryotic elongation factor 1 complex (eEF1). Stimulates the exchange of GDP for GTP on elongation factor 1A (eEF1A), probably by displacing GDP from the nucleotide binding pocket in eEF1A. In Homo sapiens (Human), this protein is Elongation factor 1-beta (EEF1B2).